The sequence spans 127 residues: Large ribosomal subunit protein bL12 (127 aa).

The protein belongs to the bacterial ribosomal protein bL12 family. Homodimer. Part of the ribosomal stalk of the 50S ribosomal subunit. Forms a multimeric L10(L12)X complex, where L10 forms an elongated spine to which 2 to 4 L12 dimers bind in a sequential fashion. Binds GTP-bound translation factors.

Forms part of the ribosomal stalk which helps the ribosome interact with GTP-bound translation factors. Is thus essential for accurate translation. In Rhizobium etli (strain ATCC 51251 / DSM 11541 / JCM 21823 / NBRC 15573 / CFN 42), this protein is Large ribosomal subunit protein bL12.